The sequence spans 911 residues: MLEEPEAATRTAAAVDCKDRPGFPVKRLIQARLPFKRLNLVPKEKVEEDTSPKAAVESKVPDLQLSLGTFESQCHTGSHVGLSTKLVGGQGPIDSFLRATIKPVPSVVIIDLTENCSDIPDSPEGHSELSPDTAGVVTTVEGAAKQQEHSAAELCLLETPSDITCHMEEEPGSPGDPKRTGDCQAGSLQSCPELTPGSRTCPTKELSSWSKAGDLLFIEKVPVVVLEDILATKPSIASLPMMSLDRSVTSESEILESCPEDDSILSHSSTNSSSPTSSPEGPSTPPEHRGGRSSPSTPACRVAKNFVKGSTEKGRSKLHRDREQQREEKEKLREEIRRAKEEARKKKEEEKELKEKERREKREKDEKEKAEKQRLKEEKRKERQEALEAKLEEKRKKEEEKRLREEEKRLREEEKRIKAEKAEITRFFQKPKTPQAPKTLAGSCGKFAPFEIKEHMVLAPRCRAALDQDLCDQLDQLLQQQSVASTFLSDLKSRLPLRSGPTRVCGHDTDIMNRDVVIVESSKVDGVSERKKFGRMKLLQFSENHRPAYWGTWNKKTAIIRPRNPWAQDKDLLDYEVDSDDEWEEEEPGESLSHSEGDEDDDVGEDEDEDDGFFVPHGYLSEDEGVTEECADPENHKVHQKLKAKEWDELLAKGKRFRVLQPVHVGCVWASEAANCTSSDLKLLQQFTACLLDVASPDEPEPGASRREKRDQHILAQLLPLLHGNVNGSKVIIHEFQEQCRRGLLTLPSPTPHLQMPNLEDAVAVPSKARLKRLISENSAYEKRPNFRMCWYVHPEVLKSFGQECLPVPCQWTYITTMPSAPREDSGSASTEGPGQSTPMLLKRKPAATMCITQFMKKRRYDGQVGSGDMDGFQADTEEDEEDDTDCMIIDVPDVGSDVSEAPIPAPTLCK.

The binds PCNA stretch occupies residues 1–31; it reads MLEEPEAATRTAAAVDCKDRPGFPVKRLIQA. A disordered region spans residues 166-200; the sequence is HMEEEPGSPGDPKRTGDCQAGSLQSCPELTPGSRT. Positions 176-327 are binds CBX1 and CBX3 chromo shadow domains; sequence DPKRTGDCQA…LHRDREQQRE (152 aa). Residues 186 to 200 show a composition bias toward polar residues; that stretch reads GSLQSCPELTPGSRT. 2 positions are modified to phosphoserine: serine 190 and serine 208. The PxVxL motif motif lies at 217-230; that stretch reads FIEKVPVVVLEDIL. 2 disordered regions span residues 250–408 and 578–618; these read SESE…EEEK and DSDD…VPHG. Over residues 265 to 281 the composition is skewed to low complexity; sequence LSHSSTNSSSPTSSPEG. At serine 293 the chain carries Phosphoserine. A compositionally biased stretch (basic and acidic residues) spans 310-408; sequence STEKGRSKLH…EEKRLREEEK (99 aa). Composition is skewed to acidic residues over residues 578–589 and 597–612; these read DSDDEWEEEEPG and GDED…EDDG. Residues 621-657 are necessary for homodimerization and competence for chromatin assembly; sequence SEDEGVTEECADPENHKVHQKLKAKEWDELLAKGKRF. The segment at 639–911 is binds to p60; it reads HQKLKAKEWD…APIPAPTLCK (273 aa). Serine 776 carries the post-translational modification Phosphoserine. Disordered stretches follow at residues 819–843 and 866–886; these read PSAP…MLLK and GSGD…DDTD. A compositionally biased stretch (polar residues) spans 827 to 839; sequence GSASTEGPGQSTP. The residue at position 838 (threonine 838) is a Phosphothreonine. Over residues 876–886 the composition is skewed to acidic residues; the sequence is DTEEDEEDDTD.

The protein belongs to the CHAF1A family. Homodimer. Part of the CAF-1 complex that contains RBBP4, CHAF1B and CHAF1A. CHAF1A binds directly to CHAF1B. Only minor amounts of RBBP4 are complexed with CHAF1A and CHAF1B in G1 phase. Interacts with PCNA; the interaction is direct. Interacts (via the PxVxL motif) with CBX5; the interaction is direct. Interacts with MBD1. Interacts with histones H3.1, H3.2 and H3.1t.

It localises to the nucleus. Acts as a component of the histone chaperone complex chromatin assembly factor 1 (CAF-1), which assembles histone octamers onto DNA during replication and repair. CAF-1 performs the first step of the nucleosome assembly process, bringing newly synthesized histones H3 and H4 to replicating DNA; histones H2A/H2B can bind to this chromatin precursor subsequent to DNA replication to complete the histone octamer. It may play a role in heterochromatin maintenance in proliferating cells by bringing newly synthesized cbx proteins to heterochromatic DNA replication foci. This chain is Chromatin assembly factor 1 subunit A, found in Mus musculus (Mouse).